The following is a 159-amino-acid chain: Crossover junction endodeoxyribonuclease RuvC (159 aa).

Active-site residues include D7, E66, and D139. Residues D7, E66, and D139 each contribute to the Mg(2+) site.

The protein belongs to the RuvC family. Homodimer which binds Holliday junction (HJ) DNA. The HJ becomes 2-fold symmetrical on binding to RuvC with unstacked arms; it has a different conformation from HJ DNA in complex with RuvA. In the full resolvosome a probable DNA-RuvA(4)-RuvB(12)-RuvC(2) complex forms which resolves the HJ. Mg(2+) serves as cofactor.

Its subcellular location is the cytoplasm. The enzyme catalyses Endonucleolytic cleavage at a junction such as a reciprocal single-stranded crossover between two homologous DNA duplexes (Holliday junction).. Its function is as follows. The RuvA-RuvB-RuvC complex processes Holliday junction (HJ) DNA during genetic recombination and DNA repair. Endonuclease that resolves HJ intermediates. Cleaves cruciform DNA by making single-stranded nicks across the HJ at symmetrical positions within the homologous arms, yielding a 5'-phosphate and a 3'-hydroxyl group; requires a central core of homology in the junction. The consensus cleavage sequence is 5'-(A/T)TT(C/G)-3'. Cleavage occurs on the 3'-side of the TT dinucleotide at the point of strand exchange. HJ branch migration catalyzed by RuvA-RuvB allows RuvC to scan DNA until it finds its consensus sequence, where it cleaves and resolves the cruciform DNA. The polypeptide is Crossover junction endodeoxyribonuclease RuvC (Sulfurovum sp. (strain NBC37-1)).